The primary structure comprises 603 residues: Probable HECT-type ubiquitin ligase-interacting protein creD (603 aa).

Disordered regions lie at residues 375-398 and 432-499; these read ELDPNGYRTPGPGSGPGTPFGTLS and LNIT…MATP. Positions 443-455 are enriched in basic and acidic residues; that stretch reads TDHESQNDSEHRR. The span at 465-481 shows a compositional bias: low complexity; the sequence is PSSGSNSHSPSSPVLSR. The segment covering 482–492 has biased composition (basic and acidic residues); that stretch reads RPSDEVDHEHV.

This sequence belongs to the arrestin family. As to quaternary structure, interacts with hulA.

Functionally, component of the regulatory network controlling carbon source utilization through ubiquitination and deubiquitination involving creA, creB, creC, creD and acrB. May be involved in signaling by recognizing appropriately phosphorylated substrates via its arrestin domains and then recruit a HECT-type ubiquitin ligase such as hulA, leading to ubiquitination of the substrate, providing a link between ubiquitination and phosphorylation in protein regulation and stability. This is Probable HECT-type ubiquitin ligase-interacting protein creD (creD) from Aspergillus flavus (strain ATCC 200026 / FGSC A1120 / IAM 13836 / NRRL 3357 / JCM 12722 / SRRC 167).